A 206-amino-acid chain; its full sequence is UPF0328 protein ECU01_0050/ECU01_1560 (206 aa).

Disordered regions lie at residues 1–153 and 179–206; these read MPRP…HSHT and GRLHGSPTKGAQTAQQAQPHPPKQLATL. The span at 74–96 shows a compositional bias: basic and acidic residues; sequence HTEGCHTHEANPEPNTKHTETES. 2 stretches are compositionally biased toward polar residues: residues 97–120 and 132–148; these read PKPQTSTQHHTPITIPSSLLSQNT and SRPSTIPANTYQPQSPH.

Belongs to the UPF0328 family.

The chain is UPF0328 protein ECU01_0050/ECU01_1560 from Encephalitozoon cuniculi (strain GB-M1) (Microsporidian parasite).